The primary structure comprises 138 residues: MGFPLEKSEDEWKKELGPEKYRIMRQKGTEHPGAGRFTHQFPKQGVFVCAACKELLYKASTKFESHCGWPAFFDNLPGKVKRIEDNSYGMHRVEAVCANCGGHLGHIFKGEGYSNPTDERHCINSASLEFHNEATNDN.

A MsrB domain is found at 9 to 133; that stretch reads EDEWKKELGP…NSASLEFHNE (125 aa). Zn(2+) contacts are provided by Cys49, Cys52, Cys97, and Cys100. Cys122 acts as the Nucleophile in catalysis.

Belongs to the MsrB Met sulfoxide reductase family. Requires Zn(2+) as cofactor.

It is found in the cytoplasm. It localises to the nucleus. This is an uncharacterized protein from Schizosaccharomyces pombe (strain 972 / ATCC 24843) (Fission yeast).